We begin with the raw amino-acid sequence, 274 residues long: Centriolar and ciliogenesis-associated protein hyls-1 (274 aa).

Disordered regions lie at residues 156–188 (RSSV…SSRP) and 255–274 (NNED…PYID). Polar residues predominate over residues 171-183 (VGLSTETEQSELQ). The segment covering 257–274 (EDWKANHDKDWSPRPYID) has biased composition (basic and acidic residues).

This sequence belongs to the HYLS1 family. As to quaternary structure, interacts with sas-4; leading to its localization into newly forming centrioles.

The protein localises to the cytoplasm. It localises to the cytoskeleton. The protein resides in the microtubule organizing center. Its subcellular location is the centrosome. It is found in the centriole. The protein localises to the cell projection. It localises to the cilium. Its function is as follows. Plays an important role in ciliogenesis. The sequence is that of Centriolar and ciliogenesis-associated protein hyls-1 from Caenorhabditis elegans.